The following is a 112-amino-acid chain: Peptidyl-prolyl cis-trans isomerase FKBP12 (112 aa).

Positions 1 to 22 are disordered; the sequence is MGVEKQIIRAGTGPNPSRGQNV. A PPIase FKBP-type domain is found at 19-112; that stretch reads GQNVTVHCTG…EFEIEVLRAQ (94 aa). An intrachain disulfide couples C26 to C80.

Belongs to the FKBP-type PPIase family. Interacts with FK506.

It is found in the cytoplasm. It catalyses the reaction [protein]-peptidylproline (omega=180) = [protein]-peptidylproline (omega=0). PPIases accelerate the folding of proteins. It catalyzes the cis-trans isomerization of proline imidic peptide bonds in oligopeptides. The sequence is that of Peptidyl-prolyl cis-trans isomerase FKBP12 (FKBP12) from Vicia faba (Broad bean).